A 192-amino-acid chain; its full sequence is ATP synthase subunit b (192 aa).

A helical membrane pass occupies residues 7–27; it reads LLLVLGVMLLATGVALAAGGE.

The protein belongs to the ATPase B chain family. F-type ATPases have 2 components, F(1) - the catalytic core - and F(0) - the membrane proton channel. F(1) has five subunits: alpha(3), beta(3), gamma(1), delta(1), epsilon(1). F(0) has three main subunits: a(1), b(2) and c(10-14). The alpha and beta chains form an alternating ring which encloses part of the gamma chain. F(1) is attached to F(0) by a central stalk formed by the gamma and epsilon chains, while a peripheral stalk is formed by the delta and b chains.

The protein localises to the cell inner membrane. Functionally, f(1)F(0) ATP synthase produces ATP from ADP in the presence of a proton or sodium gradient. F-type ATPases consist of two structural domains, F(1) containing the extramembraneous catalytic core and F(0) containing the membrane proton channel, linked together by a central stalk and a peripheral stalk. During catalysis, ATP synthesis in the catalytic domain of F(1) is coupled via a rotary mechanism of the central stalk subunits to proton translocation. Its function is as follows. Component of the F(0) channel, it forms part of the peripheral stalk, linking F(1) to F(0). In Oleidesulfovibrio alaskensis (strain ATCC BAA-1058 / DSM 17464 / G20) (Desulfovibrio alaskensis), this protein is ATP synthase subunit b.